We begin with the raw amino-acid sequence, 341 residues long: UDP-3-O-acylglucosamine N-acyltransferase (341 aa).

Catalysis depends on His241, which acts as the Proton acceptor.

It belongs to the transferase hexapeptide repeat family. LpxD subfamily. As to quaternary structure, homotrimer.

The catalysed reaction is a UDP-3-O-[(3R)-3-hydroxyacyl]-alpha-D-glucosamine + a (3R)-hydroxyacyl-[ACP] = a UDP-2-N,3-O-bis[(3R)-3-hydroxyacyl]-alpha-D-glucosamine + holo-[ACP] + H(+). Its pathway is bacterial outer membrane biogenesis; LPS lipid A biosynthesis. Catalyzes the N-acylation of UDP-3-O-acylglucosamine using 3-hydroxyacyl-ACP as the acyl donor. Is involved in the biosynthesis of lipid A, a phosphorylated glycolipid that anchors the lipopolysaccharide to the outer membrane of the cell. In Haemophilus ducreyi (strain 35000HP / ATCC 700724), this protein is UDP-3-O-acylglucosamine N-acyltransferase.